Consider the following 211-residue polypeptide: Thiamine-phosphate synthase (211 aa).

4-amino-2-methyl-5-(diphosphooxymethyl)pyrimidine is bound by residues 37 to 41 (QLRIK) and N69. Mg(2+)-binding residues include D70 and D89. S108 is a binding site for 4-amino-2-methyl-5-(diphosphooxymethyl)pyrimidine. 134–136 (TQT) serves as a coordination point for 2-[(2R,5Z)-2-carboxy-4-methylthiazol-5(2H)-ylidene]ethyl phosphate. K137 serves as a coordination point for 4-amino-2-methyl-5-(diphosphooxymethyl)pyrimidine. 2-[(2R,5Z)-2-carboxy-4-methylthiazol-5(2H)-ylidene]ethyl phosphate is bound by residues G166 and 186–187 (VS).

It belongs to the thiamine-phosphate synthase family. Mg(2+) is required as a cofactor.

The enzyme catalyses 2-[(2R,5Z)-2-carboxy-4-methylthiazol-5(2H)-ylidene]ethyl phosphate + 4-amino-2-methyl-5-(diphosphooxymethyl)pyrimidine + 2 H(+) = thiamine phosphate + CO2 + diphosphate. It catalyses the reaction 2-(2-carboxy-4-methylthiazol-5-yl)ethyl phosphate + 4-amino-2-methyl-5-(diphosphooxymethyl)pyrimidine + 2 H(+) = thiamine phosphate + CO2 + diphosphate. It carries out the reaction 4-methyl-5-(2-phosphooxyethyl)-thiazole + 4-amino-2-methyl-5-(diphosphooxymethyl)pyrimidine + H(+) = thiamine phosphate + diphosphate. It functions in the pathway cofactor biosynthesis; thiamine diphosphate biosynthesis; thiamine phosphate from 4-amino-2-methyl-5-diphosphomethylpyrimidine and 4-methyl-5-(2-phosphoethyl)-thiazole: step 1/1. Its function is as follows. Condenses 4-methyl-5-(beta-hydroxyethyl)thiazole monophosphate (THZ-P) and 2-methyl-4-amino-5-hydroxymethyl pyrimidine pyrophosphate (HMP-PP) to form thiamine monophosphate (TMP). The polypeptide is Thiamine-phosphate synthase (Salmonella newport (strain SL254)).